Here is a 427-residue protein sequence, read N- to C-terminus: Transcription termination factor Rho (427 aa).

The 76-residue stretch at 55-130 (YFFGEGVLEI…IKIEAINYRP (76 aa)) folds into the Rho RNA-BD domain. ATP contacts are provided by residues 173-178 (GKGQRG), 185-190 (KAGKTT), and Arg-216.

Belongs to the Rho family. In terms of assembly, homohexamer. The homohexamer assembles into an open ring structure.

Facilitates transcription termination by a mechanism that involves Rho binding to the nascent RNA, activation of Rho's RNA-dependent ATPase activity, and release of the mRNA from the DNA template. The polypeptide is Transcription termination factor Rho (Thermotoga maritima (strain ATCC 43589 / DSM 3109 / JCM 10099 / NBRC 100826 / MSB8)).